Here is a 123-residue protein sequence, read N- to C-terminus: uncharacterized protein (123 aa).

Positions 1 to 20 (MARTLALRASAGLVAGMAMA) are cleaved as a signal peptide.

This is an uncharacterized protein from Mycobacterium bovis (strain ATCC BAA-935 / AF2122/97).